Reading from the N-terminus, the 225-residue chain is Uracil-DNA glycosylase (225 aa).

Aspartate 65 (proton acceptor) is an active-site residue.

Belongs to the uracil-DNA glycosylase (UDG) superfamily. UNG family.

It is found in the cytoplasm. It carries out the reaction Hydrolyzes single-stranded DNA or mismatched double-stranded DNA and polynucleotides, releasing free uracil.. Its function is as follows. Excises uracil residues from the DNA which can arise as a result of misincorporation of dUMP residues by DNA polymerase or due to deamination of cytosine. The chain is Uracil-DNA glycosylase from Clostridium botulinum (strain Alaska E43 / Type E3).